We begin with the raw amino-acid sequence, 101 residues long: Urease subunit beta (101 aa).

This sequence belongs to the urease beta subunit family. In terms of assembly, heterotrimer of UreA (gamma), UreB (beta) and UreC (alpha) subunits. Three heterotrimers associate to form the active enzyme.

It is found in the cytoplasm. It catalyses the reaction urea + 2 H2O + H(+) = hydrogencarbonate + 2 NH4(+). It participates in nitrogen metabolism; urea degradation; CO(2) and NH(3) from urea (urease route): step 1/1. In Burkholderia multivorans (strain ATCC 17616 / 249), this protein is Urease subunit beta.